A 134-amino-acid polypeptide reads, in one-letter code: Protein PsiB (134 aa).

Functionally, could be involved directly or indirectly in exopolysaccharide synthesis. The sequence is that of Protein PsiB (psiB) from Rhizobium leguminosarum bv. phaseoli.